Here is a 188-residue protein sequence, read N- to C-terminus: MNIIRKLKPGTISLVLGPMFAGKTTFLIHCIYMLERLEKKVVFIKSTKNTRDKTIKTHSGIQLRPKQCKIIESTQLSDVGSLTDIHAVVIDEAHFFDDLIKCRTWADEEKIIILAGLNASFEQKMFPSIVRIFPYCSWVKYIGRTCMKCNRHNACFNVRKNADKTLILAGGSELYVTCCNNCLKKYIY.

17 to 24 (GPMFAGKT) contributes to the ATP binding site. E92 (proton acceptor) is an active-site residue. Substrate is bound at residue F121. Zn(2+) contacts are provided by C146 and C149. Residue 166–170 (LILAG) participates in substrate binding. C179 and C182 together coordinate Zn(2+).

Belongs to the thymidine kinase family.

The enzyme catalyses thymidine + ATP = dTMP + ADP + H(+). In terms of biological role, phosphorylates thymidine. ASFV replicates in the cytoplasm of infected cells and contains genes encoding a number of enzymes needed for DNA synthesis, including thymidine kinase. Important for growth in swine macrophages in vitro and is a virus virulence factor in swine. The protein is Thymidine kinase of African swine fever virus (isolate Tick/South Africa/Pretoriuskop Pr4/1996) (ASFV).